A 754-amino-acid chain; its full sequence is 5-methyltetrahydropteroyltriglutamate--homocysteine methyltransferase (754 aa).

5-methyltetrahydropteroyltri-L-glutamate is bound by residues 15–18 (RELK) and Lys114. Residues 430–432 (IGS) and Glu483 each bind L-homocysteine. Residues 430–432 (IGS) and Glu483 contribute to the L-methionine site. 5-methyltetrahydropteroyltri-L-glutamate-binding positions include 514–515 (RC) and Trp560. L-homocysteine is bound at residue Asp598. Asp598 contributes to the L-methionine binding site. Position 604 (Glu604) interacts with 5-methyltetrahydropteroyltri-L-glutamate. Residues His641, Cys643, and Glu665 each coordinate Zn(2+). Residue His694 is the Proton donor of the active site. Cys726 is a binding site for Zn(2+).

Belongs to the vitamin-B12 independent methionine synthase family. It depends on Zn(2+) as a cofactor.

The catalysed reaction is 5-methyltetrahydropteroyltri-L-glutamate + L-homocysteine = tetrahydropteroyltri-L-glutamate + L-methionine. It participates in amino-acid biosynthesis; L-methionine biosynthesis via de novo pathway; L-methionine from L-homocysteine (MetE route): step 1/1. In terms of biological role, catalyzes the transfer of a methyl group from 5-methyltetrahydrofolate to homocysteine resulting in methionine formation. The protein is 5-methyltetrahydropteroyltriglutamate--homocysteine methyltransferase of Campylobacter jejuni subsp. jejuni serotype O:23/36 (strain 81-176).